The chain runs to 586 residues: GRB2-associated-binding protein 3 (586 aa).

The PH domain occupies 5-117 (DAVCTGWLVK…WVHSISQVCN (113 aa)). Disordered regions lie at residues 149 to 171 (AHAA…TEET) and 281 to 335 (SSTI…KKPE). The segment covering 283 to 292 (TIQVDKNQGS) has biased composition (polar residues). Basic and acidic residues predominate over residues 316 to 326 (HLSERRQEEWS). Position 344 is a phosphoserine (Ser-344). The tract at residues 401–453 (GASGLGPHCSPDDYIPMNSGSISSPLPELPANLEPPPVNRDLKPQRKSRPPPL) is disordered. Ser-482 bears the Phosphoserine mark.

Belongs to the GAB family. In terms of assembly, interacts with PIK3R/p85, SHP2 and GRAP2/MONA. May interact with Grb2. Post-translationally, phosphorylated on tyrosine residue(s) after macrophage colony-stimulating factor (M-CSF) receptor stimulation.

This chain is GRB2-associated-binding protein 3 (GAB3), found in Homo sapiens (Human).